Consider the following 87-residue polypeptide: A-agglutinin-binding subunit (87 aa).

Positions 1–18 (MQLLRCFSIFSVIASVLA) are cleaved as a signal peptide. A glycan (O-linked (Man...) threonine) is linked at Thr-22. O-linked (Man...) serine glycosylation is present at Ser-30. A glycan (O-linked (Man...) threonine) is linked at Thr-32. O-linked (Man...) serine glycosylation occurs at Ser-39. An O-linked (Man...) threonine glycan is attached at Thr-63. Ser-66 is a glycosylation site (O-linked (Man...) serine). Residue Thr-75 is glycosylated (O-linked (Man...) threonine).

Heterodimer; disulfide-linked. Interacts with SAG1.

Receptor binding subunit of the a-agglutinin heterodimer. S.cerevisiae a and alpha cells express the complementary cell surface glycoproteins a-agglutinin and alpha-agglutinin, respectively, which interact with one another to promote cellular aggregation during mating. The protein is A-agglutinin-binding subunit (AGA2) of Saccharomyces cerevisiae (strain ATCC 204508 / S288c) (Baker's yeast).